Consider the following 679-residue polypeptide: Methyl-accepting chemotaxis protein McpB (679 aa).

Divergent domain HAMP stretches follow at residues 8 to 56 (AVAQ…RQLR), 63 to 112 (QQVE…AAHI), and 111 to 156 (HIAV…ERLR). In terms of domain architecture, PAS spans 171–213 (YNARIKSALDNVSANVMIADNDLNIIYMNRTVSEMLGRAEADI). Histidine 234 provides a ligand contact to heme. The short motif at 285 to 287 (DRT) is the DxT. Important for signal propagation element. Residues 289–332 (EHRAEQEVSQLVQAAAAGDFSKRVEEAGKEGFFLRLAKDLNSLV) form a divergent domain HAMP 4 region. Positions 333–385 (DTADRGLRDVSRMLGALAQGDLTQRIEADYQGTFGQLKDFSNDTAQSLSRMLG) constitute an HAMP 5 domain. One can recognise a Methyl-accepting transducer domain in the interval 390–619 (AADTINTAAS…EAAAAAEAMQ (230 aa)). Disordered stretches follow at residues 405–425 (NAELSARTEQQASSLEETASS) and 644–679 (ASARPSAPRPSAPAPLARSGMARASKARKEDGWEEF). The span at 411–425 (RTEQQASSLEETASS) shows a compositional bias: polar residues. Basic and acidic residues predominate over residues 670–679 (ARKEDGWEEF). The GWEEF pentapeptide. Important for methylation by CheR2 signature appears at 675–679 (GWEEF).

It belongs to the methyl-accepting chemotaxis (MCP) protein family. In terms of assembly, homodimer. The PAS domains form dimers in the presence and absence of oxygen. Interacts with the methyltransferase CheR2 via the C-terminal McpB pentapeptide GWEEF. Interacts with the methylesterase/gutaminase CheB2, which also binds to the GWEEF pentapeptide. In terms of processing, methylated by CheR2, but not by CheR1, CheR3 or WspC. Demethylated by CheB2. In vitro, can be methylated by E.coli CheR.

It localises to the cytoplasm. Its function is as follows. Chemoreceptor that plays a critical role in the virulence and pathogenesis of P.aeruginosa in a variety of hosts. Probably acts through oxygen sensing. Uses a heme-based sensor. Could be involved in chemotaxis. When expressed in E.coli, is able to sense and mediate repellent responses to oxygen, carbon monoxide and nitric oxide. The protein is Methyl-accepting chemotaxis protein McpB of Pseudomonas aeruginosa (strain ATCC 15692 / DSM 22644 / CIP 104116 / JCM 14847 / LMG 12228 / 1C / PRS 101 / PAO1).